A 31-amino-acid polypeptide reads, in one-letter code: Cytochrome b6-f complex subunit 6 (31 aa).

Residues 4–24 (ITSYFGFLLAALTITSVLFIG) traverse the membrane as a helical segment.

The protein belongs to the PetL family. The 4 large subunits of the cytochrome b6-f complex are cytochrome b6, subunit IV (17 kDa polypeptide, PetD), cytochrome f and the Rieske protein, while the 4 small subunits are PetG, PetL, PetM and PetN. The complex functions as a dimer.

It localises to the plastid. The protein localises to the chloroplast thylakoid membrane. In terms of biological role, component of the cytochrome b6-f complex, which mediates electron transfer between photosystem II (PSII) and photosystem I (PSI), cyclic electron flow around PSI, and state transitions. PetL is important for photoautotrophic growth as well as for electron transfer efficiency and stability of the cytochrome b6-f complex. This chain is Cytochrome b6-f complex subunit 6, found in Lepidium virginicum (Virginia pepperweed).